Reading from the N-terminus, the 450-residue chain is GTPase Der (450 aa).

EngA-type G domains follow at residues 3-170 (PTIA…LATG) and 183-356 (LKIA…AECS). GTP is bound by residues 9–16 (GRPNVGKS), 56–60 (DTGGL), 122–125 (NKVD), 189–196 (GRPNAGKS), 236–240 (DTAGV), and 301–304 (NKID). Residues 357–441 (LRISTGQLNR…PLNIVFRSTF (85 aa)) form the KH-like domain.

Belongs to the TRAFAC class TrmE-Era-EngA-EngB-Septin-like GTPase superfamily. EngA (Der) GTPase family. As to quaternary structure, associates with the 50S ribosomal subunit.

Functionally, GTPase that plays an essential role in the late steps of ribosome biogenesis. The chain is GTPase Der from Maridesulfovibrio salexigens (strain ATCC 14822 / DSM 2638 / NCIMB 8403 / VKM B-1763) (Desulfovibrio salexigens).